The following is a 107-amino-acid chain: Nucleoid-associated protein Oant_0022 (107 aa).

Belongs to the YbaB/EbfC family. Homodimer.

The protein resides in the cytoplasm. It is found in the nucleoid. Functionally, binds to DNA and alters its conformation. May be involved in regulation of gene expression, nucleoid organization and DNA protection. In Brucella anthropi (strain ATCC 49188 / DSM 6882 / CCUG 24695 / JCM 21032 / LMG 3331 / NBRC 15819 / NCTC 12168 / Alc 37) (Ochrobactrum anthropi), this protein is Nucleoid-associated protein Oant_0022.